Consider the following 326-residue polypeptide: GTP 3',8-cyclase (326 aa).

The Radical SAM core domain occupies 7–232 (GFGRSFPYLR…PRAADAGPAR (226 aa)). A GTP-binding site is contributed by R16. Residues C23 and C27 each contribute to the [4Fe-4S] cluster site. An S-adenosyl-L-methionine-binding site is contributed by Y29. Residue C30 coordinates [4Fe-4S] cluster. Residue R65 coordinates GTP. G69 contacts S-adenosyl-L-methionine. Position 96 (T96) interacts with GTP. Residue S120 coordinates S-adenosyl-L-methionine. Residue K157 coordinates GTP. M191 is an S-adenosyl-L-methionine binding site. Residues C254 and C257 each coordinate [4Fe-4S] cluster. 259–261 (RLR) lines the GTP pocket. [4Fe-4S] cluster is bound at residue C271.

Belongs to the radical SAM superfamily. MoaA family. Monomer and homodimer. [4Fe-4S] cluster serves as cofactor.

The enzyme catalyses GTP + AH2 + S-adenosyl-L-methionine = (8S)-3',8-cyclo-7,8-dihydroguanosine 5'-triphosphate + 5'-deoxyadenosine + L-methionine + A + H(+). It participates in cofactor biosynthesis; molybdopterin biosynthesis. Its function is as follows. Catalyzes the cyclization of GTP to (8S)-3',8-cyclo-7,8-dihydroguanosine 5'-triphosphate. This Stenotrophomonas maltophilia (strain R551-3) protein is GTP 3',8-cyclase.